The sequence spans 253 residues: Pupal cuticle protein (253 aa).

Positions 1-18 (MKSMIVVACLALACGAHA) are cleaved as a signal peptide. Polar residues predominate over residues 54 to 66 (LQQASKNNPNPND). The disordered stretch occupies residues 54–74 (LQQASKNNPNPNDDGSYDPRW). Tandem repeats lie at residues 97-100 (AAPA), 115-118 (AAPA), and 154-157 (AAPA). A compositionally biased stretch (low complexity) spans 155 to 167 (APAQQQWNAPAHQ). Disordered stretches follow at residues 155–178 (APAQQQWNAPAHQDWNAPAHQDWN) and 187–206 (APAHQSWNGAPSWQSGAPAH). Over residues 189 to 201 (AHQSWNGAPSWQS) the composition is skewed to polar residues.

In terms of biological role, component of the cuticle of the pupae of silk moth. The chain is Pupal cuticle protein (PCP) from Bombyx mori (Silk moth).